The chain runs to 568 residues: DNA ligase 2 (568 aa).

Glutamate 254 serves as a coordination point for ATP. The active-site N6-AMP-lysine intermediate is lysine 256. Arginine 261, arginine 276, glutamate 306, phenylalanine 346, arginine 425, and lysine 431 together coordinate ATP.

It belongs to the ATP-dependent DNA ligase family. Mg(2+) is required as a cofactor.

The catalysed reaction is ATP + (deoxyribonucleotide)n-3'-hydroxyl + 5'-phospho-(deoxyribonucleotide)m = (deoxyribonucleotide)n+m + AMP + diphosphate.. Its function is as follows. DNA ligase that seals nicks in double-stranded DNA during DNA replication, DNA recombination and DNA repair. In Methanosarcina acetivorans (strain ATCC 35395 / DSM 2834 / JCM 12185 / C2A), this protein is DNA ligase 2.